Consider the following 139-residue polypeptide: Cellular retinoic acid-binding protein 2 (139 aa).

Residues 21-31 carry the Nuclear localization signal motif; that stretch reads KALGVNMMMRK. Lysine 103 is covalently cross-linked (Glycyl lysine isopeptide (Lys-Gly) (interchain with G-Cter in SUMO)). 134–136 contributes to the all-trans-retinoate binding site; the sequence is RVY.

It belongs to the calycin superfamily. Fatty-acid binding protein (FABP) family. Interacts with importin alpha, RXR and RARA. Post-translationally, sumoylated in response to retinoic acid binding, sumoylation is critical for dissociation from ER and subsequent nuclear translocation.

The protein localises to the cytoplasm. Its subcellular location is the endoplasmic reticulum. It localises to the nucleus. Transports retinoic acid to the nucleus. Regulates the access of retinoic acid to the nuclear retinoic acid receptors. The chain is Cellular retinoic acid-binding protein 2 (Crabp2) from Rattus norvegicus (Rat).